The sequence spans 392 residues: MTATAPITQDVRTFPRKLPDGPVNLIGLTRDGLRAALIEAGTPEKQAKMRTGQIWQWLYQKGVRDFASMTNLSKDYRAMLAETFVADVPEVVSRQVSADGTRKYLVRIAGGHEVEVVYIPEVDRGTLCISSQVGCTLTCSFCHTGTQKLVRNLTAGEIIGQVMLARDDLDEWVPTGEGSDAKPRLVSNIVLMGMGEPLYNFENVRDAMKIAMDPEGISLSRRRITLSTSGVVPEIAKTAQEIGCQLAVSFHATTDDVRDKLVPINKRWPIADLLDALRDYPRVSNSERITFEYVMLKDVNDSDADARRLVQLIKGIPAKINLIPFNEWPGAPYERSDWARIEAFADIIYKAGYASPIRTPRGEDIMAACGQLKSATERARKSRKQIEAEAGL.

Catalysis depends on glutamate 115, which acts as the Proton acceptor. Residues 121-358 (EVDRGTLCIS…YKAGYASPIR (238 aa)) form the Radical SAM core domain. Cysteines 128 and 369 form a disulfide. Residues cysteine 135, cysteine 139, and cysteine 142 each coordinate [4Fe-4S] cluster. S-adenosyl-L-methionine is bound by residues 195–196 (GE), serine 227, 249–251 (SFH), and asparagine 326. Cysteine 369 (S-methylcysteine intermediate) is an active-site residue.

This sequence belongs to the radical SAM superfamily. RlmN family. It depends on [4Fe-4S] cluster as a cofactor.

Its subcellular location is the cytoplasm. It carries out the reaction adenosine(2503) in 23S rRNA + 2 reduced [2Fe-2S]-[ferredoxin] + 2 S-adenosyl-L-methionine = 2-methyladenosine(2503) in 23S rRNA + 5'-deoxyadenosine + L-methionine + 2 oxidized [2Fe-2S]-[ferredoxin] + S-adenosyl-L-homocysteine. The catalysed reaction is adenosine(37) in tRNA + 2 reduced [2Fe-2S]-[ferredoxin] + 2 S-adenosyl-L-methionine = 2-methyladenosine(37) in tRNA + 5'-deoxyadenosine + L-methionine + 2 oxidized [2Fe-2S]-[ferredoxin] + S-adenosyl-L-homocysteine. Its function is as follows. Specifically methylates position 2 of adenine 2503 in 23S rRNA and position 2 of adenine 37 in tRNAs. m2A2503 modification seems to play a crucial role in the proofreading step occurring at the peptidyl transferase center and thus would serve to optimize ribosomal fidelity. This Jannaschia sp. (strain CCS1) protein is Dual-specificity RNA methyltransferase RlmN.